The chain runs to 84 residues: U4-theraphotoxin-Hhn1a (84 aa).

An N-terminal signal peptide occupies residues 1–22 (MKVTLIAILTRAAVLVLHTTAA). A propeptide spanning residues 23-47 (EELEESQLMEVSMPDTELAAVDEER) is cleaved from the precursor. 3 disulfides stabilise this stretch: C51-C65, C55-C76, and C70-C81.

This sequence belongs to the neurotoxin 12 (Hwtx-2) family. 02 (Hwtx-2) subfamily. As to expression, expressed by the venom gland.

It localises to the secreted. Its function is as follows. Postsynaptic neurotoxin. The chain is U4-theraphotoxin-Hhn1a from Cyriopagopus hainanus (Chinese bird spider).